Reading from the N-terminus, the 281-residue chain is GPN-loop GTPase 3 (281 aa).

Position 13-18 (13-18 (GSGKST)) interacts with GTP. The Gly-Pro-Asn (GPN)-loop; involved in dimer interface signature appears at 70-72 (GPN). A GTP-binding site is contributed by 173-176 (SKMD). Residues 259–281 (VQYGEDEEPKEPKDMDEGDFTAQ) are disordered.

This sequence belongs to the GPN-loop GTPase family. As to quaternary structure, heterodimers with GPN1 or GPN2. Binds to RNA polymerase II (RNAPII).

Small GTPase required for proper nuclear import of RNA polymerase II and III (RNAPII and RNAPIII). May act at an RNAP assembly step prior to nuclear import. In Mycosarcoma maydis (Corn smut fungus), this protein is GPN-loop GTPase 3.